The primary structure comprises 622 residues: ABC transporter permease protein YxdM (622 aa).

The next 10 membrane-spanning stretches (helical) occupy residues 20 to 40 (AFFL…MFLF), 56 to 76 (GLTA…LYSV), 118 to 138 (AGII…AYIL), 154 to 174 (ITAC…ILFV), 195 to 215 (PSVL…GMVL), 219 to 239 (VHGA…YFFF), 279 to 299 (LFFI…VLAM), 498 to 518 (TVQL…VFFV), 558 to 578 (IQLA…TLFA), and 590 to 610 (VAGP…LFFL).

This sequence belongs to the ABC-4 integral membrane protein family. The complex is composed of two ATP-binding proteins (YxdL) and two transmembrane proteins (YxdM).

The protein resides in the cell membrane. Its function is as follows. Part of the ABC transporter complex YxdLM which could be involved in peptide resistance. The sequence is that of ABC transporter permease protein YxdM (yxdM) from Bacillus subtilis (strain 168).